The following is a 688-amino-acid chain: Glycine--tRNA ligase beta subunit (688 aa).

This sequence belongs to the class-II aminoacyl-tRNA synthetase family. Tetramer of two alpha and two beta subunits.

Its subcellular location is the cytoplasm. The catalysed reaction is tRNA(Gly) + glycine + ATP = glycyl-tRNA(Gly) + AMP + diphosphate. The sequence is that of Glycine--tRNA ligase beta subunit from Haemophilus influenzae (strain PittEE).